The chain runs to 207 residues: Outer-membrane lipoprotein LolB (207 aa).

Positions 1 to 21 are cleaved as a signal peptide; the sequence is MPMRKRHFYRLLPLASLLLAA. A lipid anchor (N-palmitoyl cysteine) is attached at Cys-22. Cys-22 is lipidated: S-diacylglycerol cysteine.

It belongs to the LolB family. In terms of assembly, monomer.

It is found in the cell outer membrane. In terms of biological role, plays a critical role in the incorporation of lipoproteins in the outer membrane after they are released by the LolA protein. This Yersinia pestis bv. Antiqua (strain Antiqua) protein is Outer-membrane lipoprotein LolB.